A 27-amino-acid polypeptide reads, in one-letter code: Vasotocin-neurophysin VT (27 aa).

Cysteine 1 and cysteine 6 form a disulfide bridge. Glycine 9 carries the post-translational modification Glycine amide.

The protein belongs to the vasopressin/oxytocin family.

In terms of biological role, vasotocin is an antidiuretic hormone. The chain is Vasotocin-neurophysin VT from Sclerophrys regularis (Common African toad).